The chain runs to 313 residues: Isoaspartyl peptidase (313 aa).

Thr-179 serves as the catalytic Nucleophile. Substrate is bound by residues Arg-207–Asp-210 and Thr-230–Gly-233.

It belongs to the Ntn-hydrolase family. As to quaternary structure, heterotetramer of two alpha and two beta chains arranged as a dimer of alpha/beta heterodimers. Post-translationally, autocleaved. Generates the alpha and beta subunits. The beta subunit is thought to be responsible for the nucleophile hydrolase activity.

The catalysed reaction is Cleavage of a beta-linked Asp residue from the N-terminus of a polypeptide.. Its function is as follows. Degrades proteins damaged by L-isoaspartyl residue formation (also known as beta-Asp residues). Degrades L-isoaspartyl-containing di- and tripeptides. Acts best on iso-Asp-Leu, followed by iso-Asp-Ala, -His and to a lesser extent iso-Asp-Lys, -Phe and iso-Asp-Leu-Ala. Does not act on internal iso-Asp bonds (Als-iso-Asp-Leu-Ala). Does not act on alpha-Asp bonds. Has poor L-asparaginase activity. This Salmonella typhimurium (strain LT2 / SGSC1412 / ATCC 700720) protein is Isoaspartyl peptidase (iaaA).